The chain runs to 261 residues: tRNA pseudouridine synthase A (261 aa).

Asp-52 serves as the catalytic Nucleophile. Tyr-110 lines the substrate pocket.

Belongs to the tRNA pseudouridine synthase TruA family. Homodimer.

It carries out the reaction uridine(38/39/40) in tRNA = pseudouridine(38/39/40) in tRNA. Its function is as follows. Formation of pseudouridine at positions 38, 39 and 40 in the anticodon stem and loop of transfer RNAs. This is tRNA pseudouridine synthase A from Coxiella burnetii (strain CbuK_Q154) (Coxiella burnetii (strain Q154)).